An 88-amino-acid polypeptide reads, in one-letter code: DNA-directed RNA polymerase subunit omega (88 aa).

It belongs to the RNA polymerase subunit omega family. As to quaternary structure, the RNAP catalytic core consists of 2 alpha, 1 beta, 1 beta' and 1 omega subunit. When a sigma factor is associated with the core the holoenzyme is formed, which can initiate transcription.

The catalysed reaction is RNA(n) + a ribonucleoside 5'-triphosphate = RNA(n+1) + diphosphate. Functionally, promotes RNA polymerase assembly. Latches the N- and C-terminal regions of the beta' subunit thereby facilitating its interaction with the beta and alpha subunits. The sequence is that of DNA-directed RNA polymerase subunit omega from Kineococcus radiotolerans (strain ATCC BAA-149 / DSM 14245 / SRS30216).